Consider the following 556-residue polypeptide: MTQTPDATGAAADARWLARRRGALACVALAPVAQALGRVERVADGIAFVSGLEDAMLNEVLRFDGGVTGFAHTLDEDLISVVLLDPDAGVQAQTAVTRTGAVLEVPVGPQLLGRVVDPLGRPLDGGAPLGTADTLPIERPAPEIIERDLVSEPLDTGVLIVDALFTIGRGQRELIIGDRATGKTSLAIDAIVNQRHSDVICVYVAIGQRASAVRRVIDAVRRYGAPERCIFVVAPAACAPGLQWIAPFAGFSVAEYFRDRGQHALVVVDDLTKHAATHRELALLTREPPGREAYPGDIFYVHARLLERAAKLSAKLGGGSLSALPIAETDAGNLAAYIPTNLISITDGQIVLDSALFAANQRPAVDVGLSVSRVGGKAQHPALRAASGRLRLDYAQFLELEAFTRFGGLTDARLRAQITRGERIRALITQPRFRALRTLDEVVLLKALAAGVLDAMSPDLVAPLRERLPSWLDARLAPPRDRLADDAALSMLAESIGELVERVAADAAHRAAAGGHAEDAADDMGGALDGEHASGDATSIAPTPPGGAEAGAPRKR.

177-184 (GDRATGKT) contacts ATP. Residues 514 to 556 (GGHAEDAADDMGGALDGEHASGDATSIAPTPPGGAEAGAPRKR) are disordered. Low complexity predominate over residues 546–556 (GGAEAGAPRKR).

The protein belongs to the ATPase alpha/beta chains family. In terms of assembly, F-type ATPases have 2 components, CF(1) - the catalytic core - and CF(0) - the membrane proton channel. CF(1) has five subunits: alpha(3), beta(3), gamma(1), delta(1), epsilon(1). CF(0) has three main subunits: a(1), b(2) and c(9-12). The alpha and beta chains form an alternating ring which encloses part of the gamma chain. CF(1) is attached to CF(0) by a central stalk formed by the gamma and epsilon chains, while a peripheral stalk is formed by the delta and b chains.

Its subcellular location is the cell inner membrane. It catalyses the reaction ATP + H2O + 4 H(+)(in) = ADP + phosphate + 5 H(+)(out). Its function is as follows. Produces ATP from ADP in the presence of a proton gradient across the membrane. The alpha chain is a regulatory subunit. This chain is ATP synthase subunit alpha 2, found in Burkholderia thailandensis (strain ATCC 700388 / DSM 13276 / CCUG 48851 / CIP 106301 / E264).